Here is a 935-residue protein sequence, read N- to C-terminus: Ribonuclease E (935 aa).

Residues 39–119 enclose the S1 motif domain; sequence ANIYKGKITR…GNKGAALTTF (81 aa). Mg(2+)-binding residues include D302 and D345. Residues C403 and C406 each coordinate Zn(2+). The required for zinc-mediated homotetramerization and catalytic activity stretch occupies residues 403 to 406; sequence CPRC. 2 disordered regions span residues 571–669 and 698–743; these read TKSE…DLRK and VQNN…KSPM. Composition is skewed to basic and acidic residues over residues 593–625 and 701–719; these read RSQD…ERNQ and NDEK…ERQR. Residues 720-734 show a composition bias toward basic residues; it reads RTPRHLRAANNQRRR.

It belongs to the RNase E/G family. RNase E subfamily. As to quaternary structure, component of the RNA degradosome, which is a multiprotein complex involved in RNA processing and mRNA degradation. Within the RNA degradosome, RNase E assembles into a homotetramer formed by a dimer of dimers. Zn(2+) is required as a cofactor. The cofactor is Mg(2+).

Its subcellular location is the cytoplasm. It is found in the cell inner membrane. The catalysed reaction is Endonucleolytic cleavage of single-stranded RNA in A- and U-rich regions.. Its function is as follows. Endoribonuclease that plays a central role in RNA processing and decay. Required for the maturation of 5S and 16S rRNAs and the majority of tRNAs. Also involved in the degradation of most mRNAs. This chain is Ribonuclease E, found in Haemophilus influenzae (strain ATCC 51907 / DSM 11121 / KW20 / Rd).